Consider the following 385-residue polypeptide: Effector protein hopAB3 (385 aa).

Disordered stretches follow at residues 1–61, 73–139, and 215–293; these read MVGI…AGRP, TREW…SPLY, and ADSQ…PRIN. The host recognition stretch occupies residues 1–333; that stretch reads MVGISGRAGP…INMEDLRAAL (333 aa). The span at 217–234 shows a compositional bias: low complexity; it reads SQQAARAPARTPPRSSVR. Polar residues-rich tracts occupy residues 245-256 and 265-283; these read ATESSSGSNQRS and MTSN…TSQR.

The protein belongs to the HopAB family. Interacts physically with plant cell Pto.

The protein resides in the secreted. Effector protein involved in gene-for-gene resistance in tomato plants. It is recognized by the host Pto resistance protein and elicits Pto and Prf-dependent hypersensitive response (HR) and programmed cell death (PCD), resulting in host immunity. In susceptible plants, promotes virulence, in part, by enhancing the development of disease symptoms and bacterial growth. The polypeptide is Effector protein hopAB3 (hopAB3) (Pseudomonas syringae pv. maculicola).